Here is a 120-residue protein sequence, read N- to C-terminus: NAD(P)H-quinone oxidoreductase subunit 3 (120 aa).

3 helical membrane passes run 10 to 30 (FLGF…TNLI), 64 to 84 (MFAL…PWAV), and 89 to 109 (LGLL…IALA).

It belongs to the complex I subunit 3 family. NDH-1 can be composed of about 15 different subunits; different subcomplexes with different compositions have been identified which probably have different functions.

Its subcellular location is the cellular thylakoid membrane. It carries out the reaction a plastoquinone + NADH + (n+1) H(+)(in) = a plastoquinol + NAD(+) + n H(+)(out). The catalysed reaction is a plastoquinone + NADPH + (n+1) H(+)(in) = a plastoquinol + NADP(+) + n H(+)(out). NDH-1 shuttles electrons from an unknown electron donor, via FMN and iron-sulfur (Fe-S) centers, to quinones in the respiratory and/or the photosynthetic chain. The immediate electron acceptor for the enzyme in this species is believed to be plastoquinone. Couples the redox reaction to proton translocation, and thus conserves the redox energy in a proton gradient. Cyanobacterial NDH-1 also plays a role in inorganic carbon-concentration. The chain is NAD(P)H-quinone oxidoreductase subunit 3 from Prochlorococcus marinus (strain MIT 9215).